The sequence spans 700 residues: Hedgehog-interacting protein (700 aa).

The signal sequence occupies residues 1–17; sequence MLKMLSFKLLLLAVALG. N-linked (GlcNAc...) asparagine glycosylation occurs at N99. 11 disulfides stabilise this stretch: C216-C536, C218-C543, C402-C624, C435-C452, C500-C594, C608-C617, C612-C623, C625-C634, C639-C649, C643-C655, and C657-C666. The tract at residues 376–388 is interaction with SHH zinc binding site; sequence LDDMEEMDGLSDF. D383 serves as a coordination point for Zn(2+). N-linked (GlcNAc...) asparagine glycans are attached at residues N416, N447, and N459. 2 consecutive EGF-like domains span residues 607–634 and 635–667; these read ECSR…GDFC and RTAK…PQCE.

Belongs to the HHIP family. Interacts with all three hedgehog family members, SHH, IHH and DHH. In terms of tissue distribution, widely expressed in fetal and adult tissues. Highest expression in adult heart, liver and pancreas, and in fetal kidney.

It localises to the cell membrane. The protein resides in the secreted. It is found in the cytoplasm. In terms of biological role, modulates hedgehog signaling in several cell types including brain and lung through direct interaction with members of the hedgehog family. This is Hedgehog-interacting protein (HHIP) from Homo sapiens (Human).